We begin with the raw amino-acid sequence, 914 residues long: MATTPAAAFEALMDGVTSWELPEGPVPSELLLTGEAAFPVMVNDKGQVLIAASFYGRGRLVVVSHEGYLLDAGLARFLLNAVRWLSPSPGAPVGVHPSLASLAHILEGSGVEAQVHPEPAEPLGVYCISAYNDTMTAELIQFVKRGGGLLIGGQAWHWASQHGSDQVLSEFPGNQVTSVAGVYFTDTYGVKGRFKVSKKVPKIPLQVRCGEDLRQDQQQLLEGISELDIGTKGLPSQLLVHGALAFPLGLDASLRCFLAAARYGRGRVVLAAHEGMLSAPSLGPFLLNAVRWLAKGQTGKVGVNTSLEKLHTLLLEHGLECSLEPHLTSGVCVYCCTAYSDKEAKQLQEFVAEGGGLLIGGHAWWWASQNPGRSALADFPGNVILNSFGLSILPWTLDPGCFPVPSADSLNYHFRKALSEFQATLNLEGGNLEKNWLAKLRVDGAAFLQIPAEGVPAYASLHRLLRKQLRLRLSGFPAVSRENPVAGDSCEAVVLCLATELARSGTDCSELAQGLGAWSCSSNLCPSEHTVEINARNPSDDAWMSTGLNLPNGQLTEVCLCEAAACAGLKLQIGCHTDNLMSASKLSRAPVVTHQCHMDRTEQLVSNLWGGLLYVIVPTGCNLGPMSITIKRAVPAPYYKLGETSLEAWRSCIQESPAPWGELATDNIILTVPTADLRALEDPEPLLRLWDEMMEAIARLAAQPFPFRRPERIVADVQISAGWMHSGYPIMCHLESVSELIDETGMRSRGLWGPVHELGHNQQREQWEFPPHTTEATCNLWSVYVHETVLGIPRAQAHPALSPPERENRIKTHLEKGAPLCDWKVWTALETYLQLQEAFGWEPFTQLFAEYQTLSDIPNDNPGKMNLWVRKFSEKVQKNLAPFFEAWGWPVEKEVASSLACLPEWEENPMRMYI.

The Peptidase M60 domain maps to 541-840; it reads DAWMSTGLNL…TYLQLQEAFG (300 aa).

The protein belongs to the TCAF family. As to quaternary structure, interacts with TRPM8 (via N-terminus and C-terminus domains); the interaction inhibits TRPM8 channel activity. Interacts with TRPV6.

The protein localises to the cell membrane. Negatively regulates the plasma membrane cation channel TRPM8 activity. Involved in the recruitment of TRPM8 to the cell surface. Promotes prostate cancer cell migration stimulation in a TRPM8-dependent manner. The polypeptide is TRPM8 channel-associated factor 2 (Bos taurus (Bovine)).